Reading from the N-terminus, the 885-residue chain is Translation initiation factor IF-2 (885 aa).

Residues 123-232 (ETEAKAKAEA…EAERYSDHHI (110 aa)) are compositionally biased toward basic and acidic residues. Residues 123–289 (ETEAKAKAEA…RNRSTAPESM (167 aa)) are disordered. The segment covering 253–266 (GRRARNKNTAKTKR) has biased composition (basic residues). Residues 267 to 276 (GGKDARDGRE) are compositionally biased toward basic and acidic residues. Positions 385–554 (PRAPVVTIMG…LLQAEVLELK (170 aa)) constitute a tr-type G domain. A G1 region spans residues 394–401 (GHVDHGKT). Position 394–401 (394–401 (GHVDHGKT)) interacts with GTP. The interval 419–423 (GITQH) is G2. The G3 stretch occupies residues 440-443 (DTPG). GTP is bound by residues 440–444 (DTPGH) and 494–497 (NKMD). The G4 stretch occupies residues 494–497 (NKMD). A G5 region spans residues 530–532 (SAK).

The protein belongs to the TRAFAC class translation factor GTPase superfamily. Classic translation factor GTPase family. IF-2 subfamily.

Its subcellular location is the cytoplasm. In terms of biological role, one of the essential components for the initiation of protein synthesis. Protects formylmethionyl-tRNA from spontaneous hydrolysis and promotes its binding to the 30S ribosomal subunits. Also involved in the hydrolysis of GTP during the formation of the 70S ribosomal complex. In Shewanella oneidensis (strain ATCC 700550 / JCM 31522 / CIP 106686 / LMG 19005 / NCIMB 14063 / MR-1), this protein is Translation initiation factor IF-2.